The following is a 382-amino-acid chain: Pyrimidine monooxygenase RutA (382 aa).

FMN is bound by residues 68–69, N134, E143, 159–160, and S209; these read IK and RY.

This sequence belongs to the NtaA/SnaA/DszA monooxygenase family. RutA subfamily.

The catalysed reaction is uracil + FMNH2 + NADH + O2 = (Z)-3-ureidoacrylate + FMN + NAD(+) + H2O + H(+). The enzyme catalyses thymine + FMNH2 + NADH + O2 = (Z)-2-methylureidoacrylate + FMN + NAD(+) + H2O + H(+). Functionally, catalyzes the pyrimidine ring opening between N-3 and C-4 by an unusual flavin hydroperoxide-catalyzed mechanism, adding oxygen atoms in the process to yield ureidoacrylate peracid, that immediately reacts with FMN forming ureidoacrylate and FMN-N(5)-oxide. The FMN-N(5)-oxide reacts spontaneously with NADH to produce FMN. Requires the flavin reductase RutF to regenerate FMN in vivo. In Escherichia coli O8 (strain IAI1), this protein is Pyrimidine monooxygenase RutA.